Reading from the N-terminus, the 156-residue chain is ATP synthase subunit b (156 aa).

Residues 7-29 (LLGQAISFLLFVWFCMKFVWPPL) form a helical membrane-spanning segment.

It belongs to the ATPase B chain family. F-type ATPases have 2 components, F(1) - the catalytic core - and F(0) - the membrane proton channel. F(1) has five subunits: alpha(3), beta(3), gamma(1), delta(1), epsilon(1). F(0) has three main subunits: a(1), b(2) and c(10-14). The alpha and beta chains form an alternating ring which encloses part of the gamma chain. F(1) is attached to F(0) by a central stalk formed by the gamma and epsilon chains, while a peripheral stalk is formed by the delta and b chains.

The protein resides in the cell inner membrane. Functionally, f(1)F(0) ATP synthase produces ATP from ADP in the presence of a proton or sodium gradient. F-type ATPases consist of two structural domains, F(1) containing the extramembraneous catalytic core and F(0) containing the membrane proton channel, linked together by a central stalk and a peripheral stalk. During catalysis, ATP synthesis in the catalytic domain of F(1) is coupled via a rotary mechanism of the central stalk subunits to proton translocation. Its function is as follows. Component of the F(0) channel, it forms part of the peripheral stalk, linking F(1) to F(0). The polypeptide is ATP synthase subunit b (Shewanella pealeana (strain ATCC 700345 / ANG-SQ1)).